A 177-amino-acid polypeptide reads, in one-letter code: Putative adenylate kinase (177 aa).

Residues glycine 10, glycine 12, lysine 13, threonine 14, and threonine 15 each contribute to the ATP site. Residues 30 to 53 (DITEAVKKYKLYTEKDEDMDSYVI) form an NMP region. Residues 103 to 113 (KRGYKPKKVLE) are LID. Residue arginine 104 coordinates ATP.

The protein belongs to the adenylate kinase family. AK6 subfamily. As to quaternary structure, interacts with uS11. Not a structural component of 40S pre-ribosomes, but transiently interacts with them by binding to uS11.

It carries out the reaction AMP + ATP = 2 ADP. The catalysed reaction is ATP + H2O = ADP + phosphate + H(+). Its function is as follows. Broad-specificity nucleoside monophosphate (NMP) kinase that catalyzes the reversible transfer of the terminal phosphate group between nucleoside triphosphates and monophosphates. Also has ATPase activity. Involved in the late maturation steps of the 30S ribosomal particles, specifically 16S rRNA maturation. While NMP activity is not required for ribosome maturation, ATPase activity is. Associates transiently with small ribosomal subunit protein uS11. ATP hydrolysis breaks the interaction with uS11. May temporarily remove uS11 from the ribosome to enable a conformational change of the ribosomal RNA that is needed for the final maturation step of the small ribosomal subunit. The protein is Putative adenylate kinase of Methanocaldococcus jannaschii (strain ATCC 43067 / DSM 2661 / JAL-1 / JCM 10045 / NBRC 100440) (Methanococcus jannaschii).